An 80-amino-acid polypeptide reads, in one-letter code: Saposin-B-Val (80 aa).

In terms of domain architecture, Saposin B-type spans 1 to 80 (GDVCQDCIQM…CGLVGFCEEV (80 aa)). Disulfide bonds link C4–C77, C7–C71, and C36–C47. N21 carries N-linked (GlcNAc...) (complex) asparagine glycosylation.

Saposin-B is a homodimer. Interacts with GRN; facilitates lysosomal delivery of progranulin from the extracellular space and the biosynthetic pathway. The one residue extended Saposin-B-Val is only found in a minority of the chains.

Saposin-B stimulates the hydrolysis of galacto-cerebroside sulfate by arylsulfatase A (EC 3.1.6.8), GM1 gangliosides by beta-galactosidase (EC 3.2.1.23) and globotriaosylceramide by alpha-galactosidase A (EC 3.2.1.22). Saposin-B forms a solubilizing complex with the substrates of the sphingolipid hydrolases. The protein is Saposin-B-Val (PSAP) of Sus scrofa (Pig).